Reading from the N-terminus, the 351-residue chain is MLYSLLKKYLFSLDAEDAHEKVCKILRMLSSSPFLCGLIDSQWGYKNPKLENEILGLHFPNPLGLAAGFDKNISMLRALIAFGFGYLEAGTLTNEAQVGNERPRLFRHIEEESLQNAMGFNNHGAILAARSFNRFAPYKTPIGINLGKNKRIEQVHALEDYKAVLNKCLNIGDYYTFNLSSPNTPNLRDLQNKAFVNELFCMAKEMTHKPLFLKIAPDLEIDDMLEVVNSAIEAGAHGIIATNTTIDKSLVFAPKEMGGLSGKCLTKKSREIFKELAKAFFNKSVLVSVGGISDAKEAYERIKMGASLLQIYSAFIYNGPNLCQNILKDLVKLLQKDGFLSVKEAIGADLR.

FMN contacts are provided by residues 67–71 (AGFDK) and Thr91. Residue Lys71 coordinates substrate. Substrate is bound at residue 116-120 (NAMGF). Positions 145 and 178 each coordinate FMN. Asn178 provides a ligand contact to substrate. Residue Ser181 is the Nucleophile of the active site. Asn183 is a substrate binding site. Lys214 and Thr242 together coordinate FMN. 243–244 (NT) provides a ligand contact to substrate. FMN is bound by residues Gly262, Gly291, and 312 to 313 (YS).

This sequence belongs to the dihydroorotate dehydrogenase family. Type 2 subfamily. Monomer. It depends on FMN as a cofactor.

It is found in the cell membrane. The enzyme catalyses (S)-dihydroorotate + a quinone = orotate + a quinol. It functions in the pathway pyrimidine metabolism; UMP biosynthesis via de novo pathway; orotate from (S)-dihydroorotate (quinone route): step 1/1. In terms of biological role, catalyzes the conversion of dihydroorotate to orotate with quinone as electron acceptor. The sequence is that of Dihydroorotate dehydrogenase (quinone) from Helicobacter pylori (strain Shi470).